Consider the following 434-residue polypeptide: Cyclic 2,3-diphosphoglycerate synthetase (434 aa).

It belongs to the cyclic 2,3-diphosphoglycerate synthetase family.

It is found in the cytoplasm. It carries out the reaction (2R)-2,3-bisphosphoglycerate + ATP + H(+) = cyclic (2R)-2,3-bisphosphoglycerate + ADP + phosphate. Functionally, catalyzes the formation of cyclic 2,3-diphosphoglycerate (cDPG) by formation of an intramolecular phosphoanhydride bond at the expense of ATP. This Thermococcus sibiricus (strain DSM 12597 / MM 739) protein is Cyclic 2,3-diphosphoglycerate synthetase.